We begin with the raw amino-acid sequence, 557 residues long: Aerobic glycerol-3-phosphate dehydrogenase (557 aa).

Aspartate 21–glutamate 49 contacts FAD.

This sequence belongs to the FAD-dependent glycerol-3-phosphate dehydrogenase family. It depends on FAD as a cofactor.

Its subcellular location is the cytoplasm. It catalyses the reaction a quinone + sn-glycerol 3-phosphate = dihydroxyacetone phosphate + a quinol. It functions in the pathway polyol metabolism; glycerol degradation via glycerol kinase pathway; glycerone phosphate from sn-glycerol 3-phosphate (aerobic route): step 1/1. This Staphylococcus aureus (strain MRSA252) protein is Aerobic glycerol-3-phosphate dehydrogenase (glpD).